The primary structure comprises 303 residues: DCN1-like protein 3 (303 aa).

Positions 1–40 are disordered; it reads MGQCVTKCKNPSSTLGSKNGERESSKPHKRSSSHKEEHMS. G2 is lipidated: N-myristoyl glycine. Residues 85-277 enclose the DCUN1 domain; the sequence is SSLQRIEELF…LFDTFVEWEM (193 aa).

May interact (via the DCUN1 domain) with unneddylated cullins.

The protein localises to the cell membrane. It localises to the cytoplasm. The protein resides in the nucleus. It is found in the perinuclear region. Functionally, contributes to the neddylation of all cullins by transferring NEDD8 from N-terminally acetylated NEDD8-conjugating E2s enzyme to different cullin C-terminal domain-RBX complexes. At the cell membrane, can promote and as well inhibit cullins neddylation. The protein is DCN1-like protein 3 of Xenopus laevis (African clawed frog).